The primary structure comprises 681 residues: Transmembrane protein 214-A (681 aa).

2 disordered regions span residues 1–41 and 58–99; these read MASG…GTAP and KKQN…GSRQ. N-linked (GlcNAc...) asparagine glycosylation is found at Asn300 and Asn324. The next 2 helical transmembrane spans lie at 471–491 and 608–628; these read GFPW…FVFY and LLLH…EAAV.

This sequence belongs to the TMEM214 family. Constitutively interacts with CASP4; required for the localization of procaspase 4 to the ER.

It is found in the endoplasmic reticulum membrane. Functionally, critical mediator, in cooperation with CASP4, of endoplasmic reticulum-stress induced apoptosis. Required or the activation of CASP4 following endoplasmic reticulum stress. The sequence is that of Transmembrane protein 214-A (tmem214-a) from Xenopus laevis (African clawed frog).